Consider the following 383-residue polypeptide: uncharacterized protein (383 aa).

The protein to V.anguillarum virulence protein VirA.

In terms of biological role, could have an enzymatic function. This is an uncharacterized protein from Sinorhizobium fredii (strain NBRC 101917 / NGR234).